The sequence spans 109 residues: Homeobox protein E30 (109 aa).

A compositionally biased stretch (basic residues) spans 1-12 (GPRTRRVKRSHN). Positions 1 to 27 (GPRTRRVKRSHNGKNGSPEEKRPRTAF) are disordered. The segment at residues 20–79 (EKRPRTAFSAEQLARLKREFAENRYLTERRRQQLSRDLGLTEAQIKIWFQNKRAKIKKAS) is a DNA-binding region (homeobox).

This sequence belongs to the engrailed homeobox family.

It localises to the nucleus. This chain is Homeobox protein E30, found in Apis mellifera (Honeybee).